A 466-amino-acid chain; its full sequence is E3 SUMO-protein ligase TRIM60 (466 aa).

The RING-type zinc finger occupies 15–56; the sequence is CYICSDFMEDPVTSRCGHNFCFACLRLLWDDLQGNIFCPVCQ. A B box-type zinc finger spans residues 91-132; the sequence is EEHTVCPKHDQPLVLFCVRDRDVLCTQCSLSVEHQGHYTCPI. Residues Cys-96, His-99, Cys-118, and His-124 each contribute to the Zn(2+) site. The stretch at 171 to 223 forms a coiled coil; the sequence is LREEAQYQKIEIRYEIGQIKLFLQSEYEAHLNESHMEELRSFSELNGYLETLL. Residues 272–462 enclose the B30.2/SPRY domain; sequence LSLPAQYSGL…LEILTHPTPD (191 aa).

Belongs to the TRIM/RBCC family.

E3 SUMO-protein ligase that mediates SUMOylation of TAB2 leading to inhibition of NF-kappa-B and MAPK pathways by suppressing the TRAF6/TAB2/TAK1 complex. This chain is E3 SUMO-protein ligase TRIM60 (Trim60), found in Mus musculus (Mouse).